The primary structure comprises 361 residues: Phosphoserine aminotransferase (361 aa).

An L-glutamate-binding site is contributed by arginine 43. Residues 77–78 (AS), tryptophan 103, threonine 153, aspartate 173, and glutamine 196 contribute to the pyridoxal 5'-phosphate site. The residue at position 197 (lysine 197) is an N6-(pyridoxal phosphate)lysine. 238-239 (NT) contacts pyridoxal 5'-phosphate.

This sequence belongs to the class-V pyridoxal-phosphate-dependent aminotransferase family. SerC subfamily. As to quaternary structure, homodimer. It depends on pyridoxal 5'-phosphate as a cofactor.

Its subcellular location is the cytoplasm. It carries out the reaction O-phospho-L-serine + 2-oxoglutarate = 3-phosphooxypyruvate + L-glutamate. The enzyme catalyses 4-(phosphooxy)-L-threonine + 2-oxoglutarate = (R)-3-hydroxy-2-oxo-4-phosphooxybutanoate + L-glutamate. The protein operates within amino-acid biosynthesis; L-serine biosynthesis; L-serine from 3-phospho-D-glycerate: step 2/3. Catalyzes the reversible conversion of 3-phosphohydroxypyruvate to phosphoserine and of 3-hydroxy-2-oxo-4-phosphonooxybutanoate to phosphohydroxythreonine. This Bacillus anthracis (strain A0248) protein is Phosphoserine aminotransferase.